Consider the following 194-residue polypeptide: dTTP/UTP pyrophosphatase (194 aa).

D68 serves as the catalytic Proton acceptor.

The protein belongs to the Maf family. YhdE subfamily. The cofactor is a divalent metal cation.

It localises to the cytoplasm. It catalyses the reaction dTTP + H2O = dTMP + diphosphate + H(+). The enzyme catalyses UTP + H2O = UMP + diphosphate + H(+). Functionally, nucleoside triphosphate pyrophosphatase that hydrolyzes dTTP and UTP. May have a dual role in cell division arrest and in preventing the incorporation of modified nucleotides into cellular nucleic acids. The protein is dTTP/UTP pyrophosphatase of Clostridioides difficile (strain 630) (Peptoclostridium difficile).